Here is a 293-residue protein sequence, read N- to C-terminus: Elongation factor Ts (293 aa).

Positions 81–84 (TDFV) are involved in Mg(2+) ion dislocation from EF-Tu.

Belongs to the EF-Ts family.

The protein localises to the cytoplasm. Associates with the EF-Tu.GDP complex and induces the exchange of GDP to GTP. It remains bound to the aminoacyl-tRNA.EF-Tu.GTP complex up to the GTP hydrolysis stage on the ribosome. In Thioalkalivibrio sulfidiphilus (strain HL-EbGR7), this protein is Elongation factor Ts.